The primary structure comprises 44 residues: Protein PsbN (44 aa).

Residues 6–26 (FFFSLFVWCLLLSITAYSLYV) form a helical membrane-spanning segment.

This sequence belongs to the PsbN family.

It is found in the plastid. Its subcellular location is the chloroplast thylakoid membrane. Its function is as follows. May play a role in photosystem I and II biogenesis. In Tupiella akineta (Green alga), this protein is Protein PsbN.